An 829-amino-acid chain; its full sequence is Protein SEY1 (829 aa).

Residues 1 to 721 (MNQTPQIAQD…KRSMVSSVAQ (721 aa)) are Cytoplasmic-facing. In terms of domain architecture, GB1/RHD3-type G spans 87-310 (GFAYDVVAVF…REDYVFQPAY (224 aa)). 97–104 (GSQSTGKS) is a binding site for GTP. Positions 487–525 (EYEHELALLDEDLKLIADKCRADETKKMVNAIERNVKRQ) form a coiled coil. The helical transmembrane segment at 722–742 (IPVWMYGVLVVLGWNEAMAVL) threads the bilayer. Residues 743–745 (FNP) lie on the Lumenal side of the membrane. A helical transmembrane segment spans residues 746-766 (LYFAMLLVLAASGYIILQLGL). Residues 767–829 (AGPILQIAST…DLIKGEMLEK (63 aa)) lie on the Cytoplasmic side of the membrane. Residues 806–829 (PVTASSSDEQERKGDLIKGEMLEK) are disordered. Basic and acidic residues predominate over residues 814–829 (EQERKGDLIKGEMLEK).

The protein belongs to the TRAFAC class dynamin-like GTPase superfamily. GB1/RHD3 GTPase family. RHD3 subfamily.

The protein resides in the endoplasmic reticulum membrane. Its function is as follows. Cooperates with the reticulon proteins and tubule-shaping DP1 family proteins to generate and maintain the structure of the tubular endoplasmic reticulum network. Has GTPase activity, which is required for its function in ER organization. This Cryptococcus neoformans var. neoformans serotype D (strain B-3501A) (Filobasidiella neoformans) protein is Protein SEY1.